The sequence spans 492 residues: N-succinylglutamate 5-semialdehyde dehydrogenase (492 aa).

220–225 (GSANTG) is a binding site for NAD(+). Residues glutamate 243 and cysteine 277 contribute to the active site.

It belongs to the aldehyde dehydrogenase family. AstD subfamily.

The catalysed reaction is N-succinyl-L-glutamate 5-semialdehyde + NAD(+) + H2O = N-succinyl-L-glutamate + NADH + 2 H(+). The protein operates within amino-acid degradation; L-arginine degradation via AST pathway; L-glutamate and succinate from L-arginine: step 4/5. Its function is as follows. Catalyzes the NAD-dependent reduction of succinylglutamate semialdehyde into succinylglutamate. The protein is N-succinylglutamate 5-semialdehyde dehydrogenase of Escherichia fergusonii (strain ATCC 35469 / DSM 13698 / CCUG 18766 / IAM 14443 / JCM 21226 / LMG 7866 / NBRC 102419 / NCTC 12128 / CDC 0568-73).